The sequence spans 422 residues: L-threonine dehydratase biosynthetic IlvA (422 aa).

Lys56 carries the post-translational modification N6-(pyridoxal phosphate)lysine. Residues Asn83, 189–193, and Ser315 contribute to the pyridoxal 5'-phosphate site; that span reads GGGGL. An ACT-like domain is found at 339–413; it reads HYFILNFPQR…FDKSNIYINE (75 aa).

It belongs to the serine/threonine dehydratase family. As to quaternary structure, homotetramer. Requires pyridoxal 5'-phosphate as cofactor.

The enzyme catalyses L-threonine = 2-oxobutanoate + NH4(+). The protein operates within amino-acid biosynthesis; L-isoleucine biosynthesis; 2-oxobutanoate from L-threonine: step 1/1. In terms of biological role, catalyzes the anaerobic formation of alpha-ketobutyrate and ammonia from threonine in a two-step reaction. The first step involved a dehydration of threonine and a production of enamine intermediates (aminocrotonate), which tautomerizes to its imine form (iminobutyrate). Both intermediates are unstable and short-lived. The second step is the nonenzymatic hydrolysis of the enamine/imine intermediates to form 2-ketobutyrate and free ammonia. In the low water environment of the cell, the second step is accelerated by RidA. The polypeptide is L-threonine dehydratase biosynthetic IlvA (ilvA) (Staphylococcus saprophyticus subsp. saprophyticus (strain ATCC 15305 / DSM 20229 / NCIMB 8711 / NCTC 7292 / S-41)).